The following is a 537-amino-acid chain: Hexahomomethionine N-hydroxylase (537 aa).

A helical membrane pass occupies residues 7–27 (FNTCFQILLGFIVFIASITLL).

Belongs to the cytochrome P450 family. The cofactor is heme. Highly expressed in hypocotyl and roots. Lower expression in siliques, stems and leaves. Barely detectable in flowers. Expressed only in the vascular bundles in apical plant parts.

It localises to the endoplasmic reticulum membrane. It carries out the reaction L-hexahomomethionine + 2 reduced [NADPH--hemoprotein reductase] + 2 O2 = (E)-9-(methylsulfanyl)nonanal oxime + 2 oxidized [NADPH--hemoprotein reductase] + CO2 + 3 H2O + 2 H(+). It catalyses the reaction L-pentahomomethionine + 2 reduced [NADPH--hemoprotein reductase] + 2 O2 = (E)-8-(methylsulfanyl)octanal oxime + 2 oxidized [NADPH--hemoprotein reductase] + CO2 + 3 H2O + 2 H(+). The enzyme catalyses an L-polyhomomethionine + 2 reduced [NADPH--hemoprotein reductase] + 2 O2 = an (E)-omega-(methylsulfanyl)-alkanal oxime + 2 oxidized [NADPH--hemoprotein reductase] + CO2 + 3 H2O + 2 H(+). Its function is as follows. Catalyzes the conversion of the long chain elongated methionines penta- and hexahomomethionine to their corresponding aldoximes 8-methylthiooctanaldoxime and 9-methylthiononanaldoxime. The sequence is that of Hexahomomethionine N-hydroxylase (CYP79F2) from Arabidopsis thaliana (Mouse-ear cress).